A 920-amino-acid chain; its full sequence is Probable transport protein MmpL7 (920 aa).

The next 12 helical transmembrane spans lie at 44 to 64, 210 to 230, 241 to 261, 271 to 291, 311 to 331, 344 to 364, 389 to 409, 761 to 781, 790 to 810, 822 to 842, 864 to 884, and 888 to 908; these read LLVV…LTFT, ITAW…VLLL, AIVL…AAVV, VFSW…ATML, LPAF…LLLA, LGVF…IALA, SASA…IIGM, LIHD…LASM, AVGV…IALW, VPLV…VAGI, GAVA…VLVS, and FSVL…LITV.

Belongs to the resistance-nodulation-cell division (RND) (TC 2.A.6) family. MmpL subfamily.

The protein localises to the cell membrane. The protein is Probable transport protein MmpL7 (mmpL7) of Mycobacterium bovis (strain ATCC BAA-935 / AF2122/97).